The chain runs to 66 residues: Large ribosomal subunit protein bL33c (66 aa).

Belongs to the bacterial ribosomal protein bL33 family.

It is found in the plastid. The protein resides in the chloroplast. The chain is Large ribosomal subunit protein bL33c from Crucihimalaya wallichii (Rock-cress).